Reading from the N-terminus, the 313-residue chain is ADP-L-glycero-D-manno-heptose-6-epimerase (313 aa).

Residues 10–11, 31–32, Lys-38, Arg-53, 75–79, and Asn-92 each bind NADP(+); these read MI, DN, and EGACS. Catalysis depends on Tyr-139, which acts as the Proton acceptor. Lys-143 lines the NADP(+) pocket. Asn-174 serves as a coordination point for substrate. NADP(+)-binding residues include Val-175 and Lys-183. The active-site Proton acceptor is the Lys-183. Residues Ser-185, His-192, 206-209, Arg-214, and Tyr-277 contribute to the substrate site; that span reads FAGS.

It belongs to the NAD(P)-dependent epimerase/dehydratase family. HldD subfamily. Homopentamer. NADP(+) is required as a cofactor.

The enzyme catalyses ADP-D-glycero-beta-D-manno-heptose = ADP-L-glycero-beta-D-manno-heptose. It participates in nucleotide-sugar biosynthesis; ADP-L-glycero-beta-D-manno-heptose biosynthesis; ADP-L-glycero-beta-D-manno-heptose from D-glycero-beta-D-manno-heptose 7-phosphate: step 4/4. Its pathway is bacterial outer membrane biogenesis; LPS core biosynthesis. Catalyzes the interconversion between ADP-D-glycero-beta-D-manno-heptose and ADP-L-glycero-beta-D-manno-heptose via an epimerization at carbon 6 of the heptose. This is ADP-L-glycero-D-manno-heptose-6-epimerase from Vibrio vulnificus (strain YJ016).